The chain runs to 184 residues: ATP synthase subunit b, chloroplastic (184 aa).

Residues 27–49 form a helical membrane-spanning segment; it reads LATNPINLSVVFGVLIFFGKGVL.

It belongs to the ATPase B chain family. In terms of assembly, F-type ATPases have 2 components, F(1) - the catalytic core - and F(0) - the membrane proton channel. F(1) has five subunits: alpha(3), beta(3), gamma(1), delta(1), epsilon(1). F(0) has four main subunits: a(1), b(1), b'(1) and c(10-14). The alpha and beta chains form an alternating ring which encloses part of the gamma chain. F(1) is attached to F(0) by a central stalk formed by the gamma and epsilon chains, while a peripheral stalk is formed by the delta, b and b' chains.

It localises to the plastid. It is found in the chloroplast thylakoid membrane. F(1)F(0) ATP synthase produces ATP from ADP in the presence of a proton or sodium gradient. F-type ATPases consist of two structural domains, F(1) containing the extramembraneous catalytic core and F(0) containing the membrane proton channel, linked together by a central stalk and a peripheral stalk. During catalysis, ATP synthesis in the catalytic domain of F(1) is coupled via a rotary mechanism of the central stalk subunits to proton translocation. Its function is as follows. Component of the F(0) channel, it forms part of the peripheral stalk, linking F(1) to F(0). This Olimarabidopsis pumila (Dwarf rocket) protein is ATP synthase subunit b, chloroplastic.